The primary structure comprises 695 residues: Follicle-stimulating hormone receptor (695 aa).

The N-terminal stretch at 1–17 (MTFLLVSLLAFLSLGSG) is a signal peptide. 2 disulfide bridges follow: cysteine 18-cysteine 25 and cysteine 23-cysteine 32. The LRRNT domain maps to 18 to 46 (CHHRICHCWHRVFLCQESKVTEIPSDLPR). Residues 18 to 366 (CHHRICHCWH…EDIMGYDILR (349 aa)) are Extracellular-facing. 9 LRR repeats span residues 49–72 (VELRFVLTKLRVIPKGAFSGFGDL), 73–97 (EKIEISQNDVLEVIEANVFFNLSKL), 98–118 (HEIRIEKANNLLYIDTDAFQN), 119–143 (LPNLRYLLISNTGIKHFPAVHKIQS), 144–169 (LQKVLLDIQDNINIHTVERNSFMGLS), 170–192 (FESMILWLNKNGIQEIHNCAFNG), 193–216 (TQLDELNLSDNINLEELPNDVFQG), 217–240 (ASGPVILDISRTRIHSLPSYGLEN), and 241–259 (IKKLRAKSTYNLKKLPSLD). An N-linked (GlcNAc...) asparagine glycan is attached at asparagine 93. N-linked (GlcNAc...) asparagine glycans are attached at residues asparagine 191 and asparagine 199. Cystine bridges form between cysteine 275–cysteine 346, cysteine 276–cysteine 292, cysteine 276–cysteine 356, and cysteine 292–cysteine 338. Asparagine 293 is a glycosylation site (N-linked (GlcNAc...) asparagine). Tyrosine 335 is subject to Sulfotyrosine. Residues 367–387 (VLIWFISILAITGNIIVLMIL) form a helical membrane-spanning segment. Over 388 to 398 (ITSQYKLTVPR) the chain is Cytoplasmic. The helical transmembrane segment at 399–419 (FLMCNLAFADLCIGIYLLLIA) threads the bilayer. Residues 420–444 (SVDIYTKSQYHNYAIDWQTGAGCDA) are Extracellular-facing. The chain crosses the membrane as a helical span at residues 445-465 (AGFFTVFASELSVYTLTVITL). Topologically, residues 466–487 (ERWHTITHAMQLECKVQLRHAA) are cytoplasmic. The helical transmembrane segment at 488 to 508 (IIMLLGWIFAFMVALFPIFGI) threads the bilayer. The Extracellular portion of the chain corresponds to 509–528 (SSYMKVSICLPMDIDSPLSQ). The chain crosses the membrane as a helical span at residues 529–550 (LYVMSLLVLNVLAFVVICCCYA). The Cytoplasmic portion of the chain corresponds to 551-573 (HIYLTVRNPNIVSSSSDTKIAKR). The chain crosses the membrane as a helical span at residues 574 to 594 (MAMLIFTDFLCMAPISFFAIS). Topologically, residues 595 to 608 (ASLKVPLITVSKSK) are extracellular. The chain crosses the membrane as a helical span at residues 609 to 629 (ILLVLFYPINSCANPFLYAIF). At 630–695 (TKNFRRDFFI…LIPLRHLAKN (66 aa)) the chain is on the cytoplasmic side.

This sequence belongs to the G-protein coupled receptor 1 family. FSH/LSH/TSH subfamily. As to quaternary structure, homotrimer. Functions as a homotrimer binding the FSH hormone heterodimer composed of CGA and FSHB. Interacts with ARRB2. Interacts with APPL2; interaction is independent of follicle stimulating hormone stimulation. In terms of processing, N-glycosylated; indirectly required for FSH-binding, possibly via a conformational change that allows high affinity binding of hormone. Post-translationally, sulfated.

It is found in the cell membrane. G protein-coupled receptor for follitropin, the follicle-stimulating hormone. Through cAMP production activates the downstream PI3K-AKT and ERK1/ERK2 signaling pathways. The chain is Follicle-stimulating hormone receptor (FSHR) from Felis catus (Cat).